Here is a 23-residue protein sequence, read N- to C-terminus: Septenin 2d (23 aa).

Expressed in skin glands.

The protein localises to the secreted. Functionally, may act as an antimicrobial peptide. This chain is Septenin 2d, found in Osteopilus septentrionalis (Cuban treefrog).